The primary structure comprises 300 residues: Ribokinase (300 aa).

Substrate is bound by residues S11–D13, G39–N43, and E139. Residues N183 and T210–G215 contribute to the ATP site. Positions 236 and 238 each coordinate K(+). G241 to D242 is an ATP binding site. D242 contacts substrate. The active-site Proton acceptor is the D242. K(+)-binding residues include S272, K275, and G277.

This sequence belongs to the carbohydrate kinase PfkB family. Ribokinase subfamily. As to quaternary structure, homodimer. Mg(2+) is required as a cofactor.

The protein resides in the cytoplasm. The catalysed reaction is D-ribose + ATP = D-ribose 5-phosphate + ADP + H(+). It functions in the pathway carbohydrate metabolism; D-ribose degradation; D-ribose 5-phosphate from beta-D-ribopyranose: step 2/2. Activated by a monovalent cation that binds near, but not in, the active site. The most likely occupant of the site in vivo is potassium. Ion binding induces a conformational change that may alter substrate affinity. Functionally, catalyzes the phosphorylation of ribose at O-5 in a reaction requiring ATP and magnesium. The resulting D-ribose-5-phosphate can then be used either for sythesis of nucleotides, histidine, and tryptophan, or as a component of the pentose phosphate pathway. In Lactococcus lactis subsp. lactis (strain IL1403) (Streptococcus lactis), this protein is Ribokinase.